The primary structure comprises 766 residues: UPF0313 protein PP_4872 (766 aa).

The Radical SAM core domain maps to 371–649 (AYEMIRFSVN…KAFLRYHDPK (279 aa)). 3 residues coordinate [4Fe-4S] cluster: cysteine 385, cysteine 389, and cysteine 392. Positions 670–766 (GKHQLIPLHQ…KKPRQPVIPR (97 aa)) are disordered. A compositionally biased stretch (basic and acidic residues) spans 723-735 (KPWDKREKAKAEA).

The protein belongs to the UPF0313 family. [4Fe-4S] cluster is required as a cofactor.

This is UPF0313 protein PP_4872 from Pseudomonas putida (strain ATCC 47054 / DSM 6125 / CFBP 8728 / NCIMB 11950 / KT2440).